A 364-amino-acid chain; its full sequence is Cobalt-precorrin-5B C(1)-methyltransferase (364 aa).

It belongs to the CbiD family.

The catalysed reaction is Co-precorrin-5B + S-adenosyl-L-methionine = Co-precorrin-6A + S-adenosyl-L-homocysteine. It participates in cofactor biosynthesis; adenosylcobalamin biosynthesis; cob(II)yrinate a,c-diamide from sirohydrochlorin (anaerobic route): step 6/10. Its function is as follows. Catalyzes the methylation of C-1 in cobalt-precorrin-5B to form cobalt-precorrin-6A. This Pseudomonas putida (strain ATCC 700007 / DSM 6899 / JCM 31910 / BCRC 17059 / LMG 24140 / F1) protein is Cobalt-precorrin-5B C(1)-methyltransferase.